The sequence spans 478 residues: Stromelysin-1 (478 aa).

Positions 1–17 (MKTLPTLLLLCVALCSA) are cleaved as a signal peptide. Residues 18 to 100 (YPLDGASRDA…PRCGVPDVGH (83 aa)) constitute a propeptide, activation peptide. Positions 91–98 (PRCGVPDV) match the Cysteine switch motif. Cys-93 is a Zn(2+) binding site. Ca(2+) is bound by residues Asp-125 and Asp-159. Residues His-169 and Asp-171 each contribute to the Zn(2+) site. Positions 176, 177, 179, and 181 each coordinate Ca(2+). Zn(2+) is bound at residue His-184. 3 residues coordinate Ca(2+): Gly-191, Asn-193, and Asp-195. Residue His-197 coordinates Zn(2+). Residues Asp-199, Asp-200, and Glu-202 each contribute to the Ca(2+) site. A Zn(2+)-binding site is contributed by His-219. Glu-220 is an active-site residue. The Zn(2+) site is built by His-223 and His-229. Hemopexin repeat units follow at residues 288-337 (PVMC…WPSL), 338-384 (PSAV…GFPS), 386-434 (IRKI…FPGI), and 435-478 (NPKI…WFQC). An intrachain disulfide couples Cys-291 to Cys-478. Asp-298 is a Ca(2+) binding site. Asp-390 and Asp-439 together coordinate Ca(2+).

The protein belongs to the peptidase M10A family. Ca(2+) is required as a cofactor. Zn(2+) serves as cofactor.

The protein resides in the secreted. Its subcellular location is the extracellular space. It is found in the extracellular matrix. It catalyses the reaction Preferential cleavage where P1', P2' and P3' are hydrophobic residues.. In terms of biological role, metalloproteinase with a rather broad substrate specificity that can degrade fibronectin, laminin, gelatins of type I, III, IV, and V; collagens III, IV, X, and IX, and cartilage proteoglycans. Activates different molecules including growth factors, plasminogen or other matrix metalloproteinases such as MMP9. Once released into the extracellular matrix (ECM), the inactive pro-enzyme is activated by the plasmin cascade signaling pathway. Also acts intracellularly. For example, in dopaminergic neurons, gets activated by the serine protease HTRA2 upon stress and plays a pivotal role in DA neuronal degeneration by mediating microglial activation and alpha-synuclein/SNCA cleavage. In addition, plays a role in immune response and possesses antiviral activity against various viruses. Mechanistically, translocates from the cytoplasm into the cell nucleus upon virus infection to influence NF-kappa-B activities. The polypeptide is Stromelysin-1 (MMP3) (Oryctolagus cuniculus (Rabbit)).